We begin with the raw amino-acid sequence, 344 residues long: Protein RecA (344 aa).

66-73 is a binding site for ATP; it reads GPESSGKT.

It belongs to the RecA family.

It is found in the cytoplasm. Its function is as follows. Can catalyze the hydrolysis of ATP in the presence of single-stranded DNA, the ATP-dependent uptake of single-stranded DNA by duplex DNA, and the ATP-dependent hybridization of homologous single-stranded DNAs. It interacts with LexA causing its activation and leading to its autocatalytic cleavage. In Methylobacillus flagellatus, this protein is Protein RecA.